Here is a 424-residue protein sequence, read N- to C-terminus: Histidine--tRNA ligase (424 aa).

This sequence belongs to the class-II aminoacyl-tRNA synthetase family. Homodimer.

It localises to the cytoplasm. The enzyme catalyses tRNA(His) + L-histidine + ATP = L-histidyl-tRNA(His) + AMP + diphosphate + H(+). This Shigella boydii serotype 18 (strain CDC 3083-94 / BS512) protein is Histidine--tRNA ligase.